The chain runs to 83 residues: U5-theraphotoxin-Hs1a 6 (83 aa).

A signal peptide spans 1–21 (MKTSMFLTLTGLVLLFVVCYA). Positions 22 to 49 (SESEEKEFPKELLSSIFAADSDFKVEER) are excised as a propeptide. Cystine bridges form between C51/C63, C56/C68, and C62/C75.

Belongs to the neurotoxin 10 (Hwtx-1) family. 51 (Hntx-8) subfamily. Hntx-8 sub-subfamily. In terms of tissue distribution, expressed by the venom gland.

It is found in the secreted. In terms of biological role, agglutinates erythrocytes. The protein is U5-theraphotoxin-Hs1a 6 of Cyriopagopus schmidti (Chinese bird spider).